Here is a 214-residue protein sequence, read N- to C-terminus: ATP-dependent Clp protease proteolytic subunit (214 aa).

Ser106 functions as the Nucleophile in the catalytic mechanism. His131 is an active-site residue.

Belongs to the peptidase S14 family. Fourteen ClpP subunits assemble into 2 heptameric rings which stack back to back to give a disk-like structure with a central cavity, resembling the structure of eukaryotic proteasomes.

Its subcellular location is the cytoplasm. The catalysed reaction is Hydrolysis of proteins to small peptides in the presence of ATP and magnesium. alpha-casein is the usual test substrate. In the absence of ATP, only oligopeptides shorter than five residues are hydrolyzed (such as succinyl-Leu-Tyr-|-NHMec, and Leu-Tyr-Leu-|-Tyr-Trp, in which cleavage of the -Tyr-|-Leu- and -Tyr-|-Trp bonds also occurs).. In terms of biological role, cleaves peptides in various proteins in a process that requires ATP hydrolysis. Has a chymotrypsin-like activity. Plays a major role in the degradation of misfolded proteins. In Rhodopseudomonas palustris (strain BisB5), this protein is ATP-dependent Clp protease proteolytic subunit.